The primary structure comprises 786 residues: Tyrosine-protein kinase Btk (786 aa).

Positions 1–23 (MMGTKHRNSHVNGSIKSSSSLRS) are disordered. A compositionally biased stretch (low complexity) spans 14–23 (SIKSSSSLRS). Residues 41–184 (DVVKSGSMVK…WIRAIRQVCE (144 aa)) form the PH domain. A Btk-type zinc finger spans residues 187 to 223 (NTPKSYRYHPGLWSGKKWSCCKGLSRTTFGCRAAAHW). Residues H195, C206, C207, and C217 each coordinate Zn(2+). Over residues 226–240 (ANNNPSNGSSPAQNS) the composition is skewed to low complexity. The interval 226–301 (ANNNPSNGSS…TPTSLQPQSS (76 aa)) is disordered. Polar residues predominate over residues 241–260 (TRSISPNSSTTNSQFSLQHN). Residues 264-290 (SLGGGVGGGLGGGGSLGLGGGGGGGGS) are compositionally biased toward gly residues. Residues 291–301 (CTPTSLQPQSS) are compositionally biased toward polar residues. In terms of domain architecture, SH3 spans 342-402 (HFVKLVVALY…PSNYVKPKAL (61 aa)). Residues 410-503 (WYVGDMSRQR…GLACRLKSSP (94 aa)) enclose the SH2 domain. Positions 526-779 (LMLMEELGSG…FRVLMDQLAL (254 aa)) constitute a Protein kinase domain. Residues 532–540 (LGSGQFGVV) and K554 contribute to the ATP site. The active-site Proton acceptor is the D647. Phosphotyrosine; by autocatalysis is present on Y677.

It belongs to the protein kinase superfamily. Tyr protein kinase family. TEC subfamily. It depends on Zn(2+) as a cofactor. As to expression, ring canals in the egg chambers and imaginal disks of third-instar larvae.

The catalysed reaction is L-tyrosyl-[protein] + ATP = O-phospho-L-tyrosyl-[protein] + ADP + H(+). Required for proper ring canal development. Also required for the development of male genitalia and for adult survival. This is Tyrosine-protein kinase Btk from Drosophila melanogaster (Fruit fly).